We begin with the raw amino-acid sequence, 358 residues long: CD209 antigen (358 aa).

At 1–37 the chain is on the cytoplasmic side; the sequence is MSDSKEPRLQQLGLLEEEQLRGVGFRQTRGYKSLAGC. 3 short sequence motifs (endocytosis signal) span residues 14-15, 16-18, and 31-34; these read LL, EEE, and YKSL. Residues 38–58 form a helical; Signal-anchor for type II membrane protein membrane-spanning segment; the sequence is LGHGPLVLQLLSFTLLAGLLV. Over 59–358 the chain is Extracellular; it reads QVSKVPSSLS…APTTPNPPPE (300 aa). Asn-80 carries N-linked (GlcNAc...) asparagine glycosylation. Tandem repeats lie at residues 96–118, 119–141, 142–164, 165–187, and 188–211. Positions 96 to 280 are 5 X approximate tandem repeats; the sequence is KLQEIYQELT…GLSDLNHEGT (185 aa). 3 disulfide bridges follow: Cys-210-Cys-221, Cys-238-Cys-331, and Cys-310-Cys-323. The region spanning 217–332 is the C-type lectin domain; that stretch reads FQGNCYFMSN…CNLAKFWICK (116 aa). Glu-301, Asn-303, Ile-305, Glu-308, Asn-319, and Asp-320 together coordinate Ca(2+). A disordered region spans residues 336 to 358; it reads ASCSGDEERLLSPAPTTPNPPPE.

In terms of assembly, homotetramer. Interacts with C1QBP; the interaction is indicative for a C1q:C1QBP:CD209 signaling complex. Interacts with ICAM2 and ICAM3 by binding to mannose-like carbohydrates. Interacts (via C-type lectin domain) with CEACAM1 (via Lewis X moieties); this interaction is regulated by the glycosylation pattern of CEACAM1 on cell types and regulates contact between dendritic cells and neutrophils.

It is found in the membrane. Pathogen-recognition receptor expressed on the surface of immature dendritic cells (DCs) and involved in initiation of primary immune response. Thought to mediate the endocytosis of pathogens which are subsequently degraded in lysosomal compartments. The receptor returns to the cell membrane surface and the pathogen-derived antigens are presented to resting T-cells via MHC class II proteins to initiate the adaptive immune response. Probably recognizes in a calcium-dependent manner high mannose N-linked oligosaccharides in a variety of pathogen antigens. Its function is as follows. On DCs it is a high affinity receptor for ICAM2 and ICAM3 by binding to mannose-like carbohydrates. May act as a DC rolling receptor that mediates transendothelial migration of DC presursors from blood to tissues by binding endothelial ICAM2. Seems to regulate DC-induced T-cell proliferation by binding to ICAM3 on T-cells in the immunological synapse formed between DC and T-cells. This chain is CD209 antigen (CD209), found in Papio hamadryas (Hamadryas baboon).